A 69-amino-acid chain; its full sequence is Beta-defensin 114 (69 aa).

The N-terminal stretch at 1-26 (MRIFYYLHFLCYVTFILPATCTLVNA) is a signal peptide. Intrachain disulfides connect cysteine 29–cysteine 57, cysteine 36–cysteine 50, and cysteine 40–cysteine 58.

Belongs to the beta-defensin family. As to expression, expressed in epididymis, predominantly in the caput (at protein level).

It is found in the secreted. Has a salt-sensitive antimicrobial activity against Gram-negative bacteria, including E.coli, Gram-positive, including S.aureus, and fungi, including C.albicans. Binds to and neutralizes bacterial lipopolysaccharides (LPS), abolishing TNF production by macrophages challenged with LPS. Rescues the LPS-induced reduction of sperm motility in vitro and may protect from LPS-induced lethality. The chain is Beta-defensin 114 (DEFB114) from Homo sapiens (Human).